A 384-amino-acid chain; its full sequence is Cyanate transport protein CynX (384 aa).

12 helical membrane passes run 3–23, 34–54, 68–88, 89–109, 122–142, 153–173, 204–224, 235–255, 263–283, 287–307, 322–342, and 354–374; these read LVLV…GPLL, FSVA…LALA, VAIS…YPQS, ALLL…QAVM, PLVM…GAAI, WYQT…AWWW, YFGL…AFYI, SLLA…PAMA, LLML…WLPM, VLWA…CLLL, VAFM…FSGV, and WAFH…FAPV.

This sequence belongs to the major facilitator superfamily. Cyanate porter (TC 2.A.1.17) family.

It localises to the cell inner membrane. In terms of biological role, this protein is part of an active transport system that transports exogenous cyanate into E.coli cells. This Escherichia coli (strain K12) protein is Cyanate transport protein CynX (cynX).